Consider the following 476-residue polypeptide: Glutamyl-tRNA(Gln) amidotransferase subunit A (476 aa).

Active-site charge relay system residues include lysine 70 and serine 145. Serine 169 functions as the Acyl-ester intermediate in the catalytic mechanism.

This sequence belongs to the amidase family. GatA subfamily. Heterotrimer of A, B and C subunits.

It carries out the reaction L-glutamyl-tRNA(Gln) + L-glutamine + ATP + H2O = L-glutaminyl-tRNA(Gln) + L-glutamate + ADP + phosphate + H(+). Its function is as follows. Allows the formation of correctly charged Gln-tRNA(Gln) through the transamidation of misacylated Glu-tRNA(Gln) in organisms which lack glutaminyl-tRNA synthetase. The reaction takes place in the presence of glutamine and ATP through an activated gamma-phospho-Glu-tRNA(Gln). This chain is Glutamyl-tRNA(Gln) amidotransferase subunit A, found in Methanosarcina acetivorans (strain ATCC 35395 / DSM 2834 / JCM 12185 / C2A).